Here is a 278-residue protein sequence, read N- to C-terminus: Methyltransferase GfsG (278 aa).

S-adenosyl-L-methionine-binding positions include glutamine 105 and 128–129 (DA). Glutamate 146 acts as the Proton acceptor in catalysis. An S-adenosyl-L-methionine-binding site is contributed by histidine 150.

The protein belongs to the methyltransferase superfamily.

Its pathway is antibiotic biosynthesis. Methylase required for synthesis of the 16-membered macrolide antibiotics FD-891 and FD-892. In vitro uses S-adenosyl-L-methionine to methylate a number of biosynthetic intermediates in the synthesis of FD-891. In Streptomyces halstedii, this protein is Methyltransferase GfsG.